The sequence spans 1247 residues: E3 ubiquitin-protein ligase hecw-1 (1247 aa).

The WW 1 domain maps to Thr602–Thr635. The segment at Pro633 to Arg659 is disordered. Residues Ile641–Asp653 are compositionally biased toward basic and acidic residues. The 33-residue stretch at Gln745–Ile777 folds into the WW 2 domain. In terms of domain architecture, HECT spans Asp914–Glu1247. Catalysis depends on Cys1215, which acts as the Glycyl thioester intermediate.

Expressed in the nervous system throughout the body. In the anterior ganglion, expression is limited to the two lateral outer labial neurons OLLL and OLLR.

The protein localises to the cytoplasm. The catalysed reaction is S-ubiquitinyl-[E2 ubiquitin-conjugating enzyme]-L-cysteine + [acceptor protein]-L-lysine = [E2 ubiquitin-conjugating enzyme]-L-cysteine + N(6)-ubiquitinyl-[acceptor protein]-L-lysine.. It participates in protein modification; protein ubiquitination. Functionally, E3 ubiquitin-protein ligase. Functions in the OLL neurons in the anterior ganglion to inhibit avoidance to microbial pathogens such as P.aeruginosa although worms do display avoidance behavior, vacating a P.aeruginosa lawn within 24 hours. Likely to act by inhibiting the neuropeptide receptor npr-1. This chain is E3 ubiquitin-protein ligase hecw-1, found in Caenorhabditis elegans.